Here is a 514-residue protein sequence, read N- to C-terminus: 2,3-bisphosphoglycerate-independent phosphoglycerate mutase (514 aa).

Mn(2+) is bound by residues Asp14 and Ser64. The active-site Phosphoserine intermediate is the Ser64. Substrate is bound by residues His125, 155 to 156, Arg187, Arg193, 263 to 266, and Lys336; these read RD and RADR. Residues Asp403, His407, Asp444, His445, and His463 each contribute to the Mn(2+) site.

It belongs to the BPG-independent phosphoglycerate mutase family. In terms of assembly, monomer. The cofactor is Mn(2+).

It carries out the reaction (2R)-2-phosphoglycerate = (2R)-3-phosphoglycerate. The protein operates within carbohydrate degradation; glycolysis; pyruvate from D-glyceraldehyde 3-phosphate: step 3/5. Functionally, catalyzes the interconversion of 2-phosphoglycerate and 3-phosphoglycerate. This Salmonella choleraesuis (strain SC-B67) protein is 2,3-bisphosphoglycerate-independent phosphoglycerate mutase.